We begin with the raw amino-acid sequence, 55 residues long: Large ribosomal subunit protein bL33 (55 aa).

Belongs to the bacterial ribosomal protein bL33 family.

This is Large ribosomal subunit protein bL33 from Sodalis glossinidius (strain morsitans).